We begin with the raw amino-acid sequence, 192 residues long: Nucleoside triphosphate pyrophosphatase (192 aa).

Residue Asp73 is the Proton acceptor of the active site.

This sequence belongs to the Maf family. A divalent metal cation serves as cofactor.

Its subcellular location is the cytoplasm. It catalyses the reaction a ribonucleoside 5'-triphosphate + H2O = a ribonucleoside 5'-phosphate + diphosphate + H(+). The enzyme catalyses a 2'-deoxyribonucleoside 5'-triphosphate + H2O = a 2'-deoxyribonucleoside 5'-phosphate + diphosphate + H(+). Its function is as follows. Nucleoside triphosphate pyrophosphatase. May have a dual role in cell division arrest and in preventing the incorporation of modified nucleotides into cellular nucleic acids. This is Nucleoside triphosphate pyrophosphatase from Ehrlichia chaffeensis (strain ATCC CRL-10679 / Arkansas).